The sequence spans 244 residues: Aliphatic sulfonates import ATP-binding protein SsuB 2 (244 aa).

Residues 13-229 (VQVRSLVRGF…ALGDSKFHEF (217 aa)) enclose the ABC transporter domain. Residue 45 to 52 (GKSGSGKS) participates in ATP binding.

It belongs to the ABC transporter superfamily. Aliphatic sulfonates importer (TC 3.A.1.17.2) family. As to quaternary structure, the complex is composed of two ATP-binding proteins (SsuB), two transmembrane proteins (SsuC) and a solute-binding protein (SsuA).

It is found in the cell membrane. The enzyme catalyses ATP + H2O + aliphatic sulfonate-[sulfonate-binding protein]Side 1 = ADP + phosphate + aliphatic sulfonateSide 2 + [sulfonate-binding protein]Side 1.. In terms of biological role, part of the ABC transporter complex SsuABC involved in aliphatic sulfonates import. Responsible for energy coupling to the transport system. The protein is Aliphatic sulfonates import ATP-binding protein SsuB 2 of Rhodococcus jostii (strain RHA1).